A 333-amino-acid chain; its full sequence is Anthranilate phosphoribosyltransferase (333 aa).

5-phospho-alpha-D-ribose 1-diphosphate-binding positions include Gly-80, 83–84, Thr-88, 90–93, 108–116, and Ser-120; these read GD, NLST, and KHGNRSASG. Residue Gly-80 participates in anthranilate binding. Ser-92 is a Mg(2+) binding site. Asn-111 is an anthranilate binding site. Arg-166 is an anthranilate binding site. 2 residues coordinate Mg(2+): Asp-224 and Glu-225.

It belongs to the anthranilate phosphoribosyltransferase family. In terms of assembly, homodimer. Mg(2+) serves as cofactor.

The enzyme catalyses N-(5-phospho-beta-D-ribosyl)anthranilate + diphosphate = 5-phospho-alpha-D-ribose 1-diphosphate + anthranilate. It functions in the pathway amino-acid biosynthesis; L-tryptophan biosynthesis; L-tryptophan from chorismate: step 2/5. Its function is as follows. Catalyzes the transfer of the phosphoribosyl group of 5-phosphorylribose-1-pyrophosphate (PRPP) to anthranilate to yield N-(5'-phosphoribosyl)-anthranilate (PRA). The protein is Anthranilate phosphoribosyltransferase of Pyrobaculum aerophilum (strain ATCC 51768 / DSM 7523 / JCM 9630 / CIP 104966 / NBRC 100827 / IM2).